We begin with the raw amino-acid sequence, 407 residues long: Phospholipase A1-II 7 (407 aa).

Serine 230 acts as the Acyl-ester intermediate in catalysis. Catalysis depends on charge relay system residues serine 230, aspartate 299, and histidine 336.

Belongs to the AB hydrolase superfamily. Lipase family.

The protein resides in the cytoplasm. In terms of biological role, acylhydrolase that catalyzes the hydrolysis of phospholipids at the sn-1 position. The sequence is that of Phospholipase A1-II 7 from Oryza sativa subsp. indica (Rice).